The following is a 363-amino-acid chain: 3-isopropylmalate dehydrogenase (363 aa).

An NAD(+)-binding site is contributed by 78–91 (GPKWEHLPPAEQPE). Substrate is bound by residues R99, R109, R138, and D227. Residues D227, D251, and D255 each coordinate Mg(2+). 285–297 (GSAPDIAGKNIAN) serves as a coordination point for NAD(+).

This sequence belongs to the isocitrate and isopropylmalate dehydrogenases family. LeuB type 1 subfamily. Homodimer. It depends on Mg(2+) as a cofactor. Mn(2+) is required as a cofactor.

Its subcellular location is the cytoplasm. It catalyses the reaction (2R,3S)-3-isopropylmalate + NAD(+) = 4-methyl-2-oxopentanoate + CO2 + NADH. It functions in the pathway amino-acid biosynthesis; L-leucine biosynthesis; L-leucine from 3-methyl-2-oxobutanoate: step 3/4. Catalyzes the oxidation of 3-carboxy-2-hydroxy-4-methylpentanoate (3-isopropylmalate) to 3-carboxy-4-methyl-2-oxopentanoate. The product decarboxylates to 4-methyl-2 oxopentanoate. This is 3-isopropylmalate dehydrogenase from Yersinia pestis.